Reading from the N-terminus, the 162-residue chain is 2-C-methyl-D-erythritol 2,4-cyclodiphosphate synthase (162 aa).

A divalent metal cation-binding residues include aspartate 12 and histidine 14. Residues 12–14 (DVH) and 38–39 (HS) contribute to the 4-CDP-2-C-methyl-D-erythritol 2-phosphate site. Histidine 46 serves as a coordination point for a divalent metal cation. 4-CDP-2-C-methyl-D-erythritol 2-phosphate contacts are provided by residues 60-62 (DIG), 65-69 (FPDTD), and arginine 146.

The protein belongs to the IspF family. Homotrimer. It depends on a divalent metal cation as a cofactor.

It catalyses the reaction 4-CDP-2-C-methyl-D-erythritol 2-phosphate = 2-C-methyl-D-erythritol 2,4-cyclic diphosphate + CMP. It participates in isoprenoid biosynthesis; isopentenyl diphosphate biosynthesis via DXP pathway; isopentenyl diphosphate from 1-deoxy-D-xylulose 5-phosphate: step 4/6. Its function is as follows. Involved in the biosynthesis of isopentenyl diphosphate (IPP) and dimethylallyl diphosphate (DMAPP), two major building blocks of isoprenoid compounds. Catalyzes the conversion of 4-diphosphocytidyl-2-C-methyl-D-erythritol 2-phosphate (CDP-ME2P) to 2-C-methyl-D-erythritol 2,4-cyclodiphosphate (ME-CPP) with a corresponding release of cytidine 5-monophosphate (CMP). The protein is 2-C-methyl-D-erythritol 2,4-cyclodiphosphate synthase of Bordetella petrii (strain ATCC BAA-461 / DSM 12804 / CCUG 43448).